The chain runs to 141 residues: Proteasome maturation protein (141 aa).

Residue Lys-39 forms a Glycyl lysine isopeptide (Lys-Gly) (interchain with G-Cter in SUMO2) linkage.

This sequence belongs to the POMP/UMP1 family. As to quaternary structure, constituent of preproteasomes, but not of mature 20S proteasomes. Within the preproteasome, may directly interact with PSMB1/beta6, PSMB4/beta7, PSMB5/beta5, PSMB6/beta1 and PSMB9/beta1i. Interaction with PSMB8/beta5i is controversial. Forms tetramers.

Its subcellular location is the cytoplasm. The protein localises to the cytosol. It is found in the nucleus. It localises to the microsome membrane. In terms of biological role, molecular chaperone essential for the assembly of standard proteasomes and immunoproteasomes. Degraded after completion of proteasome maturation. Mediates the association of 20S preproteasome with the endoplasmic reticulum. This chain is Proteasome maturation protein (POMP), found in Bos taurus (Bovine).